The primary structure comprises 222 residues: Putative cobalt transport protein CbiM (222 aa).

6 helical membrane passes run 8–28, 43–63, 75–95, 107–127, 134–154, and 178–198; these read LPME…GYGI, PLLA…LPSV, LGAI…VLLF, TLGA…YLVF, LNIT…TYLT, and IFAI…ALLW.

The protein belongs to the CbiM family. As to quaternary structure, forms an energy-coupling factor (ECF) transporter complex composed of an ATP-binding protein (A component, CbiO), a transmembrane protein (T component, CbiQ) and 2 possible substrate-capture proteins (S components, CbiM and CbiN) of unknown stoichimetry.

The protein resides in the cell membrane. The protein operates within cofactor biosynthesis; adenosylcobalamin biosynthesis. Its function is as follows. Part of the energy-coupling factor (ECF) transporter complex CbiMNOQ involved in cobalt import. The sequence is that of Putative cobalt transport protein CbiM from Methanococcus voltae (strain ATCC BAA-1334 / A3).